The sequence spans 657 residues: uncharacterized protein (657 aa).

The N-terminal stretch at 1-17 (MACVLACVAVLIGAASA) is a signal peptide.

This is an uncharacterized protein from Orgyia pseudotsugata (Douglas-fir tussock moth).